The following is a 546-amino-acid chain: RuBisCO large subunit-binding protein subunit alpha, chloroplastic (546 aa).

A chloroplast-targeting transit peptide spans 1 to 6 (RFSVRA). Ser-50 bears the Phosphoserine mark.

It belongs to the chaperonin (HSP60) family. In terms of assembly, oligomer of probably six alpha and six beta subunits.

The protein localises to the plastid. It is found in the chloroplast. Functionally, this protein binds RuBisCO small and large subunits and is implicated in the assembly of the enzyme oligomer. The chain is RuBisCO large subunit-binding protein subunit alpha, chloroplastic from Brassica napus (Rape).